A 1300-amino-acid polypeptide reads, in one-letter code: ATP-dependent RNA helicase HrpA (1300 aa).

A Helicase ATP-binding domain is found at 87–250 (LEAIRDHQVV…FNNAPIIEVS (164 aa)). 100–107 (GETGSGKT) lines the ATP pocket. Positions 197–200 (DEAH) match the DEAH box motif. In terms of domain architecture, Helicase C-terminal spans 274–444 (QLQAIFDAVD…SVILQMTALG (171 aa)).

This sequence belongs to the DEAD box helicase family. DEAH subfamily.

The enzyme catalyses ATP + H2O = ADP + phosphate + H(+). In terms of biological role, not yet known. This chain is ATP-dependent RNA helicase HrpA (hrpA), found in Escherichia coli (strain K12).